The primary structure comprises 194 residues: MRESSQIRETTETKIKLSLQLDEGKNVSVQTGVGFFDHMLTLFARHGRFGLQVEAEGDVFVDAHHTVEDVGIVLGNCLKEALQNKEGINRYGSAYVPMDESLGFVAIDISGRSYIVFQGELTNPKLGDFDTELTEEFFRAVAHTANITLHARILYGSNTHHKIEALFKAFGRALREAVERNAHITGVNSTKGML.

This sequence belongs to the imidazoleglycerol-phosphate dehydratase family.

Its subcellular location is the cytoplasm. It catalyses the reaction D-erythro-1-(imidazol-4-yl)glycerol 3-phosphate = 3-(imidazol-4-yl)-2-oxopropyl phosphate + H2O. It functions in the pathway amino-acid biosynthesis; L-histidine biosynthesis; L-histidine from 5-phospho-alpha-D-ribose 1-diphosphate: step 6/9. This Bacillus thuringiensis (strain Al Hakam) protein is Imidazoleglycerol-phosphate dehydratase.